The chain runs to 301 residues: Inosose dehydratase (301 aa).

The protein belongs to the IolE/MocC family. Requires glutathione as cofactor. It depends on Co(2+) as a cofactor. The cofactor is Mn(2+).

The catalysed reaction is scyllo-inosose = 3D-3,5/4-trihydroxycyclohexane-1,2-dione + H2O. Catalyzes the dehydration of inosose (2-keto-myo-inositol, 2KMI or 2,4,6/3,5-pentahydroxycyclohexanone) to 3D-(3,5/4)-trihydroxycyclohexane-1,2-dione (D-2,3-diketo-4-deoxy-epi-inositol). This is Inosose dehydratase from Salmonella typhimurium (strain LT2 / SGSC1412 / ATCC 700720).